The chain runs to 88 residues: CRISPR-associated endoribonuclease Cas2 3 (88 aa).

D9 contributes to the Mg(2+) binding site.

Belongs to the CRISPR-associated endoribonuclease Cas2 protein family. Homodimer, forms a heterotetramer with a Cas1 homodimer. It depends on Mg(2+) as a cofactor.

CRISPR (clustered regularly interspaced short palindromic repeat), is an adaptive immune system that provides protection against mobile genetic elements (viruses, transposable elements and conjugative plasmids). CRISPR clusters contain sequences complementary to antecedent mobile elements and target invading nucleic acids. CRISPR clusters are transcribed and processed into CRISPR RNA (crRNA). Functions as a ssRNA-specific endoribonuclease. Involved in the integration of spacer DNA into the CRISPR cassette. In Thermodesulfovibrio yellowstonii (strain ATCC 51303 / DSM 11347 / YP87), this protein is CRISPR-associated endoribonuclease Cas2 3.